The chain runs to 569 residues: Pyrophosphate--fructose 6-phosphate 1-phosphotransferase subunit beta (569 aa).

Gly107 contacts diphosphate. Residue Asp201 participates in Mg(2+) binding. Substrate-binding positions include 229–231 (TID), 268–269 (KY), 276–278 (MGR), Glu337, and 442–445 (YEGR). Asp231 serves as the catalytic Proton acceptor.

It belongs to the phosphofructokinase type A (PFKA) family. PPi-dependent PFK group II subfamily. Clade 'Long' sub-subfamily. As to quaternary structure, tetramer of two alpha (regulatory) and two beta (catalytic) chains. Mg(2+) is required as a cofactor.

It is found in the cytoplasm. The enzyme catalyses beta-D-fructose 6-phosphate + diphosphate = beta-D-fructose 1,6-bisphosphate + phosphate + H(+). Its pathway is carbohydrate degradation; glycolysis; D-glyceraldehyde 3-phosphate and glycerone phosphate from D-glucose: step 3/4. Its activity is regulated as follows. Allosterically activated by fructose 2,6-bisphosphate. Its function is as follows. Catalytic subunit of pyrophosphate--fructose 6-phosphate 1-phosphotransferase. Catalyzes the phosphorylation of D-fructose 6-phosphate, the first committing step of glycolysis. Uses inorganic phosphate (PPi) as phosphoryl donor instead of ATP like common ATP-dependent phosphofructokinases (ATP-PFKs), which renders the reaction reversible, and can thus function both in glycolysis and gluconeogenesis. The chain is Pyrophosphate--fructose 6-phosphate 1-phosphotransferase subunit beta from Solanum tuberosum (Potato).